The following is a 265-amino-acid chain: Phosphatidylglycerol--prolipoprotein diacylglyceryl transferase (265 aa).

A run of 7 helical transmembrane segments spans residues 11 to 31 (AVSIGPLQFRWYGLMYLFGFI), 56 to 76 (MVTWAIFGVVLGGRLGYILFY), 91 to 111 (IWHGGMSFHGGLLGVLFAVWL), 120 to 140 (FLSVVDFVAPLIPPGLFFGRI), 173 to 193 (QLYEAVLEGVVLFAAVWWFSG), 198 to 218 (VGAVSGLFGVLYAIFRFAVEF), and 233 to 253 (WLTMGQVLCLPLFGVGMWLLL). Arg139 lines the a 1,2-diacyl-sn-glycero-3-phospho-(1'-sn-glycerol) pocket.

It belongs to the Lgt family.

Its subcellular location is the cell inner membrane. It carries out the reaction L-cysteinyl-[prolipoprotein] + a 1,2-diacyl-sn-glycero-3-phospho-(1'-sn-glycerol) = an S-1,2-diacyl-sn-glyceryl-L-cysteinyl-[prolipoprotein] + sn-glycerol 1-phosphate + H(+). It participates in protein modification; lipoprotein biosynthesis (diacylglyceryl transfer). Catalyzes the transfer of the diacylglyceryl group from phosphatidylglycerol to the sulfhydryl group of the N-terminal cysteine of a prolipoprotein, the first step in the formation of mature lipoproteins. This is Phosphatidylglycerol--prolipoprotein diacylglyceryl transferase from Nitratidesulfovibrio vulgaris (strain DSM 19637 / Miyazaki F) (Desulfovibrio vulgaris).